Consider the following 917-residue polypeptide: Serine/arginine repetitive matrix protein 1 (917 aa).

Methionine 1 is subject to N-acetylmethionine. A necessary for DNA and RNA-binding region spans residues 1–151 (MDAGFFRGTS…ASMKKQDEDK (151 aa)). The tract at residues 1-156 (MDAGFFRGTS…QDEDKDKRDK (156 aa)) is necessary for mRNA 3'-end cleavage and cytoplasmic accumulation. Arginine 7 carries the citrulline modification. The PWI domain maps to 27–126 (QLKFAECLEK…AGIPSAFLEL (100 aa)). A Glycyl lysine isopeptide (Lys-Gly) (interchain with G-Cter in SUMO2) cross-link involves residue lysine 127. Basic and acidic residues predominate over residues 139 to 170 (EKLASMKKQDEDKDKRDKEEKESSREKRERSR). The interval 139–917 (EKLASMKKQD…MRKAQVSPQS (779 aa)) is disordered. Position 140 is an N6-acetyllysine (lysine 140). The segment covering 171 to 207 (SPRRRKSRSPSPRRRSSPVRRERKRSHSRSPRHRTKS) has biased composition (basic residues). Positions 214–234 (PEKKEKTPELPEPSVKVKEPS) are enriched in basic and acidic residues. Residue threonine 220 is modified to Phosphothreonine. Phosphoserine is present on serine 227. Lysine 231 participates in a covalent cross-link: Glycyl lysine isopeptide (Lys-Gly) (interchain with G-Cter in SUMO1); alternate. Lysine 231 participates in a covalent cross-link: Glycyl lysine isopeptide (Lys-Gly) (interchain with G-Cter in SUMO2); alternate. A phosphoserine mark is found at serine 234 and serine 240. Threonine 241 is modified (phosphothreonine). Positions 246–275 (KVPKPEPIPEPKEPSPEKNSKKEKEKEKTR) are enriched in basic and acidic residues. A Glycyl lysine isopeptide (Lys-Gly) (interchain with G-Cter in SUMO2) cross-link involves residue lysine 249. At serine 260 the chain carries Phosphoserine. Composition is skewed to basic residues over residues 276-329 (PRSR…RTPP) and 336-351 (PRHRRSRSPVRRRRRS). A necessary for speckles and matrix localization region spans residues 300-702 (RRHRSRSRSY…NKRHSPSPRP (403 aa)). Low complexity predominate over residues 352 to 368 (SASLSGSSSSSSSSRSR). Residues serine 389, serine 391, serine 393, and serine 402 each carry the phosphoserine modification. Threonine 406 is modified (phosphothreonine). Residue serine 414 is modified to Phosphoserine. A Phosphothreonine modification is found at threonine 416. Residues serine 420, serine 429, serine 431, and serine 436 each carry the phosphoserine modification. The segment covering 428–438 (VSVSPGRTSGK) has biased composition (polar residues). Lysine 447 participates in a covalent cross-link: Glycyl lysine isopeptide (Lys-Gly) (interchain with G-Cter in SUMO2). Residues serine 450 and serine 452 each carry the phosphoserine modification. A Glycyl lysine isopeptide (Lys-Gly) (interchain with G-Cter in SUMO2) cross-link involves residue lysine 459. Phosphoserine occurs at positions 463 and 465. Lysine 472 is covalently cross-linked (Glycyl lysine isopeptide (Lys-Gly) (interchain with G-Cter in SUMO2)). Residue serine 478 is modified to Phosphoserine. Residues 478-501 (SVQQRRQYRRQNQQSSSDSGSSSS) show a composition bias toward low complexity. The segment covering 503–518 (EDERPKRSHVKNGEVG) has biased composition (basic and acidic residues). Phosphoserine occurs at positions 524, 526, 528, 530, 532, 563, and 565. Residues 557-574 (SGRRRRSPSPPPTRRRRS) are compositionally biased toward basic residues. Threonine 569 is subject to Phosphothreonine. Phosphoserine is present on residues serine 574 and serine 576. Basic residues predominate over residues 581–606 (PRRRRTPTPPPRRRTPSPPPRRRSPS). A phosphothreonine mark is found at threonine 586, threonine 588, and threonine 595. Position 597 is a phosphoserine (serine 597). Positions 607 to 619 (PRRYSPPIQRRYS) are enriched in low complexity. Tyrosine 610 carries the phosphotyrosine modification. Residues serine 611, serine 619, and serine 621 each carry the phosphoserine modification. Threonine 628 carries the post-translational modification Phosphothreonine. A phosphoserine mark is found at serine 630, serine 640, serine 642, serine 650, and serine 652. Basic residues predominate over residues 635–650 (PKRRASPSPPPKRRVS). Positions 663–677 (TKRRSPSLSSKHRKG) are enriched in basic residues. The span at 699–713 (SPRPRAPQTSSPPPV) shows a compositional bias: pro residues. Phosphoserine occurs at positions 708, 709, 718, 720, 726, and 728. Composition is skewed to low complexity over residues 714 to 732 (RRGASSSPQRRQSPSPSTR), 749 to 772 (AASPSPQSVRRVSSSRSVSGSPEP), and 782 to 799 (SPVQSQSPSTNWSPAVPV). Threonine 731 bears the Phosphothreonine mark. Residues serine 751, serine 753, serine 761, serine 765, serine 767, serine 769, serine 782, serine 786, serine 788, and serine 790 each carry the phosphoserine modification. Position 791 is a phosphothreonine (threonine 791). Serine 794 and serine 804 each carry phosphoserine. Threonine 806 carries the post-translational modification Phosphothreonine. 3 positions are modified to phosphoserine: serine 808, serine 810, and serine 815. Over residues 822 to 847 (KKKKKKKDKKHKKDKKHKKHKKHKKE) the composition is skewed to basic residues. Positions 850-879 (VAAAAAAAVTPAAIAAATTTLAQEEPVAAP) are enriched in low complexity. Lysine 882 participates in a covalent cross-link: Glycyl lysine isopeptide (Lys-Gly) (interchain with G-Cter in SUMO2). Phosphothreonine is present on threonine 885. Serine 887 is subject to Phosphoserine. A compositionally biased stretch (basic and acidic residues) spans 895 to 905 (DLEKHLREKAL). Serine 914 carries the post-translational modification Phosphoserine.

Belongs to the splicing factor SR family. In terms of assembly, identified in the spliceosome C complex. Found in a pre-mRNA splicing complex with SFRS4, SFRS5, SNRP70, SNRPA1, SRRM1 and SRRM2. Component of the minor spliceosome, which splices U12-type introns. Found in a pre-mRNA exonic splicing enhancer (ESE) complex with SNRP70, SNRPA1, SRRM1 and TRA2B/SFRS10. Found in a mRNA splicing-dependent exon junction complex (EJC) with DEK, PRPF8, NCBP1, RBM8A, RNPS1, SRRM1 and ALYREF/THOC4. Interacts with DDX39B, CPSF1, RBM8A, RNPS1, and ALYREF/THOC4. Seems to be a compound of RNA export complexes that are released from speckles in a ATP-dependent manner. Post-translationally, phosphorylated on multiple serine and threonine residues by DYRK3 during the G2-to-M transition, after the nuclear-envelope breakdown. Phosphorylation by DYRK3 promotes disassembly of nuclear speckles. Citrullinated by PADI4.

Part of pre- and post-splicing multiprotein mRNP complexes. As a component of the minor spliceosome, involved in the splicing of U12-type introns in pre-mRNAs. Involved in numerous pre-mRNA processing events. Promotes constitutive and exonic splicing enhancer (ESE)-dependent splicing activation by bridging together sequence-specific (SR family proteins, SFRS4, SFRS5 and TRA2B/SFRS10) and basal snRNP (SNRP70 and SNRPA1) factors of the spliceosome. Stimulates mRNA 3'-end cleavage independently of the formation of an exon junction complex. Binds both pre-mRNA and spliced mRNA 20-25 nt upstream of exon-exon junctions. Binds RNA and DNA with low sequence specificity and has similar preference for either double- or single-stranded nucleic acid substrates. The protein is Serine/arginine repetitive matrix protein 1 (SRRM1) of Pongo abelii (Sumatran orangutan).